Reading from the N-terminus, the 263-residue chain is Tryptophan synthase alpha chain (263 aa).

Residues glutamate 49 and aspartate 60 each act as proton acceptor in the active site.

The protein belongs to the TrpA family. In terms of assembly, tetramer of two alpha and two beta chains.

The enzyme catalyses (1S,2R)-1-C-(indol-3-yl)glycerol 3-phosphate + L-serine = D-glyceraldehyde 3-phosphate + L-tryptophan + H2O. Its pathway is amino-acid biosynthesis; L-tryptophan biosynthesis; L-tryptophan from chorismate: step 5/5. The alpha subunit is responsible for the aldol cleavage of indoleglycerol phosphate to indole and glyceraldehyde 3-phosphate. This Roseobacter denitrificans (strain ATCC 33942 / OCh 114) (Erythrobacter sp. (strain OCh 114)) protein is Tryptophan synthase alpha chain.